Reading from the N-terminus, the 662-residue chain is Methyl-accepting chemotaxis protein TlpA (662 aa).

Residues 1–16 (MKKTLTTIRRSSIARR) lie on the Cytoplasmic side of the membrane. A helical membrane pass occupies residues 17-37 (LIISFLLILIVPITALSVSAY). Residues 38–281 (QSAVASLDVQ…IHDAASRVLI (244 aa)) are Extracellular-facing. The Cache domain maps to 152–228 (VTEPYESISS…KAGTELKGDW (77 aa)). Residues 282–302 (MASIVLAIAIGAGMTAIYFVI) traverse the membrane as a helical segment. The HAMP domain maps to 303–355 (RSITKPLRRIVASAEKISEGDLTETIEINSKDELGVLSESFNHMAHSLRSLIH). Topologically, residues 303–662 (RSITKPLRRI…DLTKQFKVDK (360 aa)) are cytoplasmic. Residues Glu-370, Glu-594, Glu-629, and Glu-636 each carry the glutamate methyl ester (Glu) modification. Positions 374 to 610 (SADQTSRATE…EISAASNDIT (237 aa)) constitute a Methyl-accepting transducer domain.

It belongs to the methyl-accepting chemotaxis (MCP) protein family. As to quaternary structure, interacts with YabA.

The protein localises to the cell membrane. Chemotactic-signal transducers respond to changes in the concentration of attractants and repellents in the environment, transduce a signal from the outside to the inside of the cell, and facilitate sensory adaptation through the variation of the level of methylation. All amino acids serve as attractants in B.subtilis, they appear to cause an increase in the turnover methyl groups, leading to methylation of an unidentified acceptor, while repellents have been shown to cause a decrease in methyl group turnover. The methyl groups are added by a methyltransferase and removed by a methylesterase. The polypeptide is Methyl-accepting chemotaxis protein TlpA (Bacillus subtilis (strain 168)).